The chain runs to 224 residues: Ankyrin repeat domain-containing protein 45 (224 aa).

ANK repeat units lie at residues 46 to 76 and 80 to 109; these read VGRN…DVNE and RGYS…DFQA.

Widely expressed.

It localises to the cytoplasm. It is found in the midbody. Its subcellular location is the midbody ring. The protein localises to the cleavage furrow. In terms of biological role, may play a role during cell division. The protein is Ankyrin repeat domain-containing protein 45 of Danio rerio (Zebrafish).